The chain runs to 308 residues: Beta-carotene hydroxylase 2, chloroplastic (308 aa).

A chloroplast-targeting transit peptide spans 1-59 (MAAARISFSSTSRTSYYRHSPFLGPKPTPTTPSVYPITPFSPNLGSILRCRRRPSFTVC). 2 consecutive transmembrane segments (helical) span residues 105–125 (YLVA…MAVY) and 139–159 (FSEM…MEFW). A Fatty acid hydroxylase domain is found at 152–279 (AAVGMEFWAR…KFNGVPYGLF (128 aa)). The Histidine box-1 motif lies at 164 to 169 (HKALWH). The Histidine box-2 motif lies at 176–180 (HESHH). Transmembrane regions (helical) follow at residues 191 to 211 (DVFA…GFFH) and 215 to 235 (IPGL…AYMF). The short motif at 237–242 (HDGLVH) is the Histidine box-3 element. A Histidine box-4 motif is present at residues 263-267 (HSLHH).

This sequence belongs to the sterol desaturase family.

It is found in the plastid. The protein resides in the chloroplast membrane. It catalyses the reaction all-trans-beta-carotene + 4 reduced [2Fe-2S]-[ferredoxin] + 2 O2 + 4 H(+) = all-trans-zeaxanthin + 4 oxidized [2Fe-2S]-[ferredoxin] + 2 H2O. It carries out the reaction all-trans-beta-carotene + 2 reduced [2Fe-2S]-[ferredoxin] + O2 + 2 H(+) = beta-cryptoxanthin + 2 oxidized [2Fe-2S]-[ferredoxin] + H2O. The enzyme catalyses beta-cryptoxanthin + 2 reduced [2Fe-2S]-[ferredoxin] + O2 + 2 H(+) = all-trans-zeaxanthin + 2 oxidized [2Fe-2S]-[ferredoxin] + H2O. Its activity is regulated as follows. Inhibited by o-phenanthroline and 8-hydroxyquinoline. In terms of biological role, nonheme diiron monooxygenase involved in the biosynthesis of xanthophylls. Specific for beta-ring hydroxylations of beta-carotene. Produces beta-cryptoxanthin and zeaxanthin. Uses ferredoxin as an electron donor. The protein is Beta-carotene hydroxylase 2, chloroplastic of Capsicum annuum (Capsicum pepper).